Reading from the N-terminus, the 72-residue chain is Cell division protein ZapB (72 aa).

A coiled-coil region spans residues 1–71; that stretch reads MSLEILDQLE…LRSLLGRIDN (71 aa). The tract at residues 36-56 is disordered; that stretch reads LSRQTNEQLRSENEHLKTEHH. Basic and acidic residues predominate over residues 44–56; it reads LRSENEHLKTEHH.

It belongs to the ZapB family. As to quaternary structure, homodimer. The ends of the coiled-coil dimer bind to each other, forming polymers. Interacts with FtsZ.

It is found in the cytoplasm. Its function is as follows. Non-essential, abundant cell division factor that is required for proper Z-ring formation. It is recruited early to the divisome by direct interaction with FtsZ, stimulating Z-ring assembly and thereby promoting cell division earlier in the cell cycle. Its recruitment to the Z-ring requires functional FtsA or ZipA. The protein is Cell division protein ZapB of Histophilus somni (strain 129Pt) (Haemophilus somnus).